A 474-amino-acid chain; its full sequence is Glutamate--tRNA ligase (474 aa).

The 'HIGH' region motif lies at 9–19 (PSPTGYLHVGG). The short motif at 240 to 244 (KLSKR) is the 'KMSKS' region element. Position 243 (lysine 243) interacts with ATP.

The protein belongs to the class-I aminoacyl-tRNA synthetase family. Glutamate--tRNA ligase type 1 subfamily. As to quaternary structure, monomer.

It localises to the cytoplasm. The catalysed reaction is tRNA(Glu) + L-glutamate + ATP = L-glutamyl-tRNA(Glu) + AMP + diphosphate. Functionally, catalyzes the attachment of glutamate to tRNA(Glu) in a two-step reaction: glutamate is first activated by ATP to form Glu-AMP and then transferred to the acceptor end of tRNA(Glu). In Vibrio vulnificus (strain CMCP6), this protein is Glutamate--tRNA ligase.